A 173-amino-acid chain; its full sequence is MGTPCHYALFDLQPSFRLDLDKLATRYRELAREVHPDRFADASEREQRIALEKSAALNDAYQTLRSAPRRARYLLAISGHEVPQEVTVHDPDFLLQQMQWREELEELQDEADLDGVGVFKKRLKFAQDTLNEDFAACWDAPGERDKAERLMRRMQFLDKLAQEVRQLEERLDD.

Residues 5-77 form the J domain; the sequence is CHYALFDLQP…PRRARYLLAI (73 aa).

Belongs to the HscB family. As to quaternary structure, interacts with HscA and stimulates its ATPase activity.

Its function is as follows. Co-chaperone involved in the maturation of iron-sulfur cluster-containing proteins. Seems to help targeting proteins to be folded toward HscA. This chain is Co-chaperone protein HscB homolog, found in Pseudomonas putida (strain GB-1).